The chain runs to 973 residues: Putative helicase 022R (973 aa).

Residues 473 to 502 (AKARGGRDSGNEDDEEDSATDEDDSNPWDS) are disordered. Positions 483 to 498 (NEDDEEDSATDEDDSN) are enriched in acidic residues. The SF3 helicase domain maps to 658-840 (GPVTKLLAFF…FVTPGTTAPA (183 aa)). An ATP-binding site is contributed by 702 to 709 (GTGNNGKT).

This Frog virus 3 (isolate Goorha) (FV-3) protein is Putative helicase 022R.